We begin with the raw amino-acid sequence, 275 residues long: Membrane protein insertase YidC 1 (275 aa).

The first 25 residues, 1–25 (MRKVLRVKKNIKIARIVPLVLLLVA), serve as a signal peptide directing secretion. A lipid anchor (N-palmitoyl cysteine) is attached at cysteine 26. Cysteine 26 carries S-diacylglycerol cysteine lipidation. The next 5 helical transmembrane spans lie at 58–78 (SIGV…MPLF), 129–149 (YASL…FQAL), 171–191 (LYLL…LTNL), 198–216 (VMMT…FMGF), and 222–240 (VVLY…LLLL).

The protein belongs to the OXA1/ALB3/YidC family. Type 2 subfamily.

The protein localises to the cell membrane. Required for the insertion and/or proper folding and/or complex formation of integral membrane proteins into the membrane. Involved in integration of membrane proteins that insert both dependently and independently of the Sec translocase complex, as well as at least some lipoproteins. This chain is Membrane protein insertase YidC 1, found in Streptococcus pyogenes serotype M1.